The primary structure comprises 67 residues: Kappa-conotoxin-like 2 (67 aa).

The first 26 residues, Met1 to Thr26, serve as a signal peptide directing secretion. 4 disulfides stabilise this stretch: Cys29–Cys43, Cys36–Cys48, Cys42–Cys51, and Cys47–Cys55. Phe59 carries the phenylalanine amide modification. Positions Ala63–Glu67 are excised as a propeptide.

Belongs to the conotoxin I2 superfamily. In terms of tissue distribution, expressed by the venom duct.

The protein resides in the secreted. Its function is as follows. Inhibits the vertebrate voltage-gated potassium channels Kv1.1/KCNA1 and Kv1.3/KCNA3. This is Kappa-conotoxin-like 2 from Conus vexillum (Flag cone).